Here is a 572-residue protein sequence, read N- to C-terminus: Proteinaceous RNase P 1, chloroplastic/mitochondrial (572 aa).

Residues 1–70 (MLRLTCFTPS…SRHLCTLPLA (70 aa)) constitute a chloroplast and mitochondrion transit peptide. PPR repeat units follow at residues 96–130 (PEALLKQKLDMCSKKGDVLEALRLYDEARRNGVQL), 136–174 (NVLLYVCSLAEAATESSPNPGLSRGFDIFKQMIVDKVVP), 175–209 (NEATFTNGARLAVAKDDPEMAFDMVKQMKAFGIQP), and 210–244 (RLRSYGPALFGFCRKGDADKAYEVDAHMVESEVVP). The PRORP domain maps to 338 to 565 (MDENGVCKCC…DLQTSRQWLC (228 aa)). Residues Cys-344 and Cys-347 each coordinate Zn(2+). Residues Asp-399, Asp-474, Asp-475, and Asp-493 each contribute to the Mn(2+) site. Residues His-548 and Cys-565 each coordinate Zn(2+).

The protein belongs to the PPR family. P subfamily. Requires Mg(2+) as cofactor. Mn(2+) serves as cofactor.

It is found in the mitochondrion. The protein resides in the plastid. Its subcellular location is the chloroplast. It carries out the reaction Endonucleolytic cleavage of RNA, removing 5'-extranucleotides from tRNA precursor.. Functionally, endonuclease RNase P responsible for the 5' maturation of tRNA precursors. Preferentially cleaves at the unusual cleavage site, but also able to cleave at the classical cleavage site. Also involved in the maturation of mRNAs in mitochondria. This is Proteinaceous RNase P 1, chloroplastic/mitochondrial (PRORP1) from Arabidopsis thaliana (Mouse-ear cress).